We begin with the raw amino-acid sequence, 339 residues long: Protoheme IX farnesyltransferase (339 aa).

A disordered region spans residues 1 to 27; that stretch reads MTVADPRLTDAPAHSRTSLLGRRRGGR. The next 9 helical transmembrane spans lie at 45–65, 67–87, 117–136, 140–159, 165–185, 191–211, 236–256, 257–277, and 309–329; these read IVELLLITTIPVMLFAAGGLP, GWLILTTFVGGALAAGCANTL, ALVFATVLGIASTAIFVAFV, SAALALGAILLYVVGYTLLL, QNIVWGGVAGCMQVLIGWTAV, WAPFVLFGVIFLWTPPHYWPL, VSRQIVLYTIAMVLCSLLLVP, LGGAGVVYGAAALVLGIGFLV, and PMGVFHGSITYLTLLSAAVAV.

This sequence belongs to the UbiA prenyltransferase family. Protoheme IX farnesyltransferase subfamily.

It localises to the cell membrane. It carries out the reaction heme b + (2E,6E)-farnesyl diphosphate + H2O = Fe(II)-heme o + diphosphate. The protein operates within porphyrin-containing compound metabolism; heme O biosynthesis; heme O from protoheme: step 1/1. In terms of biological role, converts heme B (protoheme IX) to heme O by substitution of the vinyl group on carbon 2 of heme B porphyrin ring with a hydroxyethyl farnesyl side group. This is Protoheme IX farnesyltransferase from Kineococcus radiotolerans (strain ATCC BAA-149 / DSM 14245 / SRS30216).